The sequence spans 229 residues: Potassium/proton antiporter CemA (229 aa).

Transmembrane regions (helical) follow at residues 7-27 and 107-127; these read FTPL…SFSV and ILHF…SILG.

It belongs to the CemA family.

It localises to the plastid. The protein resides in the chloroplast inner membrane. It carries out the reaction K(+)(in) + H(+)(out) = K(+)(out) + H(+)(in). In terms of biological role, contributes to K(+)/H(+) antiport activity by supporting proton efflux to control proton extrusion and homeostasis in chloroplasts in a light-dependent manner to modulate photosynthesis. Prevents excessive induction of non-photochemical quenching (NPQ) under continuous-light conditions. Indirectly promotes efficient inorganic carbon uptake into chloroplasts. The chain is Potassium/proton antiporter CemA from Solanum tuberosum (Potato).